The sequence spans 211 residues: Thiamine-phosphate synthase (211 aa).

4-amino-2-methyl-5-(diphosphooxymethyl)pyrimidine is bound by residues Gln-37–Lys-41 and Asn-69. Positions 70 and 89 each coordinate Mg(2+). Ser-108 contributes to the 4-amino-2-methyl-5-(diphosphooxymethyl)pyrimidine binding site. Thr-134–Thr-136 lines the 2-[(2R,5Z)-2-carboxy-4-methylthiazol-5(2H)-ylidene]ethyl phosphate pocket. Lys-137 is a binding site for 4-amino-2-methyl-5-(diphosphooxymethyl)pyrimidine. Residues Gly-166 and Val-186 to Ser-187 each bind 2-[(2R,5Z)-2-carboxy-4-methylthiazol-5(2H)-ylidene]ethyl phosphate.

Belongs to the thiamine-phosphate synthase family. Mg(2+) is required as a cofactor.

It catalyses the reaction 2-[(2R,5Z)-2-carboxy-4-methylthiazol-5(2H)-ylidene]ethyl phosphate + 4-amino-2-methyl-5-(diphosphooxymethyl)pyrimidine + 2 H(+) = thiamine phosphate + CO2 + diphosphate. The enzyme catalyses 2-(2-carboxy-4-methylthiazol-5-yl)ethyl phosphate + 4-amino-2-methyl-5-(diphosphooxymethyl)pyrimidine + 2 H(+) = thiamine phosphate + CO2 + diphosphate. It carries out the reaction 4-methyl-5-(2-phosphooxyethyl)-thiazole + 4-amino-2-methyl-5-(diphosphooxymethyl)pyrimidine + H(+) = thiamine phosphate + diphosphate. The protein operates within cofactor biosynthesis; thiamine diphosphate biosynthesis; thiamine phosphate from 4-amino-2-methyl-5-diphosphomethylpyrimidine and 4-methyl-5-(2-phosphoethyl)-thiazole: step 1/1. In terms of biological role, condenses 4-methyl-5-(beta-hydroxyethyl)thiazole monophosphate (THZ-P) and 2-methyl-4-amino-5-hydroxymethyl pyrimidine pyrophosphate (HMP-PP) to form thiamine monophosphate (TMP). In Salmonella paratyphi B (strain ATCC BAA-1250 / SPB7), this protein is Thiamine-phosphate synthase.